Reading from the N-terminus, the 2080-residue chain is Dedicator of cytokinesis protein 6 (2080 aa).

The span at E20–G31 shows a compositional bias: basic and acidic residues. 3 disordered regions span residues E20–G44, Q156–S189, and P408–A441. The span at S32–S42 shows a compositional bias: low complexity. Residue S178 is modified to Phosphoserine. Positions P408–E425 are enriched in basic and acidic residues. The C2 DOCK-type domain maps to R546 to V712. At R863 the chain carries Omega-N-methylarginine. S870, S878, and S882 each carry phosphoserine. A disordered region spans residues A1101–D1123. The span at S1104–P1122 shows a compositional bias: low complexity. Position 1341 is a phosphoserine (S1341). The DOCKER domain maps to R1620 to P2056. Position 2064 is a phosphothreonine (T2064). Phosphoserine is present on residues S2065 and S2069.

Belongs to the DOCK family. In terms of tissue distribution, widely expressed with highest levels in lung and heart.

It localises to the cytoplasm. The protein resides in the perinuclear region. In terms of biological role, acts as a guanine nucleotide exchange factor (GEF) for CDC42 and RAC1 small GTPases. Through its activation of CDC42 and RAC1, regulates neurite outgrowth in an vitro differentiation system. In Mus musculus (Mouse), this protein is Dedicator of cytokinesis protein 6 (Dock6).